Consider the following 247-residue polypeptide: Caffeoyl-CoA O-methyltransferase (247 aa).

Lys-21 provides a ligand contact to substrate. S-adenosyl-L-methionine is bound by residues Thr-63, Glu-85, 87–88 (GV), Ser-93, Asp-111, and Ala-140. Substrate is bound at residue Asp-163. Residue Asp-163 coordinates a divalent metal cation. Residue Asp-165 coordinates S-adenosyl-L-methionine. Residues Asp-189 and Asn-190 each contribute to the a divalent metal cation site. Asn-194 is a binding site for substrate.

Belongs to the class I-like SAM-binding methyltransferase superfamily. Cation-dependent O-methyltransferase family. CCoAMT subfamily. Homodimer. The cofactor is Ca(2+). Mg(2+) serves as cofactor. Requires Zn(2+) as cofactor.

It catalyses the reaction (E)-caffeoyl-CoA + S-adenosyl-L-methionine = (E)-feruloyl-CoA + S-adenosyl-L-homocysteine + H(+). It functions in the pathway aromatic compound metabolism; phenylpropanoid biosynthesis. Functionally, methylates caffeoyl-CoA to feruloyl-CoA and 5-hydroxyferuloyl-CoA to sinapoyl-CoA. Plays a role in the synthesis of feruloylated polysaccharides. Involved in the reinforcement of the plant cell wall. Also involved in the responding to wounding or pathogen challenge by the increased formation of cell wall-bound ferulic acid polymers. This Medicago sativa (Alfalfa) protein is Caffeoyl-CoA O-methyltransferase (CCOMT).